The chain runs to 624 residues: Chaperone protein HtpG (624 aa).

The tract at residues 1–336 (MKGQETRGFQ…SSDLPLNVSR (336 aa)) is a; substrate-binding. A b region spans residues 337–552 (EILQDSTVTR…ADEMSTQMAK (216 aa)). The segment at 553 to 624 (LFAAAGQKVP…IRRMNQLLVS (72 aa)) is c.

This sequence belongs to the heat shock protein 90 family. In terms of assembly, homodimer.

The protein resides in the cytoplasm. Functionally, molecular chaperone. Has ATPase activity. The protein is Chaperone protein HtpG of Escherichia coli O1:K1 / APEC.